The sequence spans 344 residues: uncharacterized protein (344 aa).

The signal sequence occupies residues methionine 1–serine 19. Positions serine 323–leucine 344 are cleaved as a propeptide — removed in mature form.

The protein localises to the cell membrane. This is an uncharacterized protein from Dictyostelium discoideum (Social amoeba).